The primary structure comprises 342 residues: 4-hydroxy-3-methylbut-2-enyl diphosphate reductase (342 aa).

Residue C47 coordinates [4Fe-4S] cluster. Residues H78 and H111 each contribute to the (2E)-4-hydroxy-3-methylbut-2-enyl diphosphate site. H78 and H111 together coordinate dimethylallyl diphosphate. Positions 78 and 111 each coordinate isopentenyl diphosphate. A [4Fe-4S] cluster-binding site is contributed by C133. A (2E)-4-hydroxy-3-methylbut-2-enyl diphosphate-binding site is contributed by H161. H161 lines the dimethylallyl diphosphate pocket. H161 contacts isopentenyl diphosphate. E163 (proton donor) is an active-site residue. T201 provides a ligand contact to (2E)-4-hydroxy-3-methylbut-2-enyl diphosphate. C231 is a [4Fe-4S] cluster binding site. Residues S259, S260, N261, and S303 each contribute to the (2E)-4-hydroxy-3-methylbut-2-enyl diphosphate site. 4 residues coordinate dimethylallyl diphosphate: S259, S260, N261, and S303. Residues S259, S260, N261, and S303 each coordinate isopentenyl diphosphate.

It belongs to the IspH family. The cofactor is [4Fe-4S] cluster.

It carries out the reaction isopentenyl diphosphate + 2 oxidized [2Fe-2S]-[ferredoxin] + H2O = (2E)-4-hydroxy-3-methylbut-2-enyl diphosphate + 2 reduced [2Fe-2S]-[ferredoxin] + 2 H(+). The enzyme catalyses dimethylallyl diphosphate + 2 oxidized [2Fe-2S]-[ferredoxin] + H2O = (2E)-4-hydroxy-3-methylbut-2-enyl diphosphate + 2 reduced [2Fe-2S]-[ferredoxin] + 2 H(+). It participates in isoprenoid biosynthesis; dimethylallyl diphosphate biosynthesis; dimethylallyl diphosphate from (2E)-4-hydroxy-3-methylbutenyl diphosphate: step 1/1. Its pathway is isoprenoid biosynthesis; isopentenyl diphosphate biosynthesis via DXP pathway; isopentenyl diphosphate from 1-deoxy-D-xylulose 5-phosphate: step 6/6. Catalyzes the conversion of 1-hydroxy-2-methyl-2-(E)-butenyl 4-diphosphate (HMBPP) into a mixture of isopentenyl diphosphate (IPP) and dimethylallyl diphosphate (DMAPP). Acts in the terminal step of the DOXP/MEP pathway for isoprenoid precursor biosynthesis. This chain is 4-hydroxy-3-methylbut-2-enyl diphosphate reductase, found in Anaplasma marginale (strain St. Maries).